Here is a 198-residue protein sequence, read N- to C-terminus: MKNPPALEQLISALKVLPGVGPKTAQRMAFHLLQRDKQGADKLARALDRALTQLTHCQRCNTFSEAELCAICADETRRRDQLCIVEMPADLMMLEQAKCFDGLYFVLMGRISPLDNIGPKDLHLDKLLARALDGQVSEIVIATNFTAEGEVTSHMLSELFKERGLTVTRIARGMPVGGELEYVDLGTLAQAVYERRGV.

The segment at 57-72 adopts a C4-type zinc-finger fold; the sequence is CQRCNTFSEAELCAIC. The Toprim domain occupies 80 to 175; that stretch reads DQLCIVEMPA…TVTRIARGMP (96 aa).

The protein belongs to the RecR family.

In terms of biological role, may play a role in DNA repair. It seems to be involved in an RecBC-independent recombinational process of DNA repair. It may act with RecF and RecO. This is Recombination protein RecR from Chromobacterium violaceum (strain ATCC 12472 / DSM 30191 / JCM 1249 / CCUG 213 / NBRC 12614 / NCIMB 9131 / NCTC 9757 / MK).